The primary structure comprises 352 residues: Photosystem II D2 protein (352 aa).

Residues 40–60 (CAYLALGGWLTGTTFVTSWYT) form a helical membrane-spanning segment. A chlorophyll a-binding site is contributed by His117. A helical membrane pass occupies residues 124 to 140 (GFMLRQFEIARLVGVRP). Gln129 and Asn142 together coordinate pheophytin a. The chain crosses the membrane as a helical span at residues 152 to 165 (VFVSVFLIYPLGQS). Position 197 (His197) interacts with chlorophyll a. A helical membrane pass occupies residues 207–227 (GALLCAIHGATVENTLFQDGE). Positions 214 and 261 each coordinate a plastoquinone. A Fe cation-binding site is contributed by His214. His268 contributes to the Fe cation binding site. Residues 278–294 (GLWMSSIGVVGLALNLR) form a helical membrane-spanning segment.

Belongs to the reaction center PufL/M/PsbA/D family. PSII is composed of 1 copy each of membrane proteins PsbA, PsbB, PsbC, PsbD, PsbE, PsbF, PsbH, PsbI, PsbJ, PsbK, PsbL, PsbM, PsbT, PsbX, PsbY, PsbZ, Psb30/Ycf12, peripheral proteins PsbO, CyanoQ (PsbQ), PsbU, PsbV and a large number of cofactors. It forms dimeric complexes. Requires The D1/D2 heterodimer binds P680, chlorophylls that are the primary electron donor of PSII, and subsequent electron acceptors. It shares a non-heme iron and each subunit binds pheophytin, quinone, additional chlorophylls, carotenoids and lipids. There is also a Cl(-1) ion associated with D1 and D2, which is required for oxygen evolution. The PSII complex binds additional chlorophylls, carotenoids and specific lipids. as cofactor.

Its subcellular location is the cellular thylakoid membrane. It carries out the reaction 2 a plastoquinone + 4 hnu + 2 H2O = 2 a plastoquinol + O2. Functionally, photosystem II (PSII) is a light-driven water:plastoquinone oxidoreductase that uses light energy to abstract electrons from H(2)O, generating O(2) and a proton gradient subsequently used for ATP formation. It consists of a core antenna complex that captures photons, and an electron transfer chain that converts photonic excitation into a charge separation. The D1/D2 (PsbA/PsbD) reaction center heterodimer binds P680, the primary electron donor of PSII as well as several subsequent electron acceptors. D2 is needed for assembly of a stable PSII complex. In Synechococcus sp. (strain JA-2-3B'a(2-13)) (Cyanobacteria bacterium Yellowstone B-Prime), this protein is Photosystem II D2 protein.